Reading from the N-terminus, the 348-residue chain is Alcohol dehydrogenase 1 (348 aa).

Ser-2 is modified (N-acetylserine). Cys-44 provides a ligand contact to Zn(2+). NAD(+)-binding residues include His-45, Thr-46, and His-49. Zn(2+) is bound by residues His-67, Glu-68, Cys-98, Cys-101, Cys-104, Cys-112, and Cys-154. 5 residues coordinate NAD(+): Gly-181, Gly-182, Leu-183, Asp-202, and Lys-207. Residue Ser-213 is modified to Phosphoserine. Phe-222 contributes to the NAD(+) binding site. Thr-223 is modified (phosphothreonine). Residues Lys-226 and Lys-234 each participate in a glycyl lysine isopeptide (Lys-Gly) (interchain with G-Cter in ubiquitin) cross-link. Residues Val-269 and Met-271 each coordinate NAD(+). Residue Ser-279 is modified to Phosphoserine. A Glycyl lysine isopeptide (Lys-Gly) (interchain with G-Cter in ubiquitin) cross-link involves residue Lys-287. Residues Ser-294 and Val-296 each coordinate NAD(+). Ser-316 carries the post-translational modification Phosphoserine. Lys-319 participates in a covalent cross-link: Glycyl lysine isopeptide (Lys-Gly) (interchain with G-Cter in ubiquitin). Arg-341 contacts NAD(+).

It belongs to the zinc-containing alcohol dehydrogenase family. As to quaternary structure, homotetramer. Zn(2+) serves as cofactor.

It is found in the cytoplasm. It carries out the reaction a primary alcohol + NAD(+) = an aldehyde + NADH + H(+). It catalyses the reaction a secondary alcohol + NAD(+) = a ketone + NADH + H(+). The catalysed reaction is ethanol + NAD(+) = acetaldehyde + NADH + H(+). The enzyme catalyses allyl alcohol + NADP(+) = acrolein + NADPH + H(+). It carries out the reaction 1-propanol + NAD(+) = propanal + NADH + H(+). It catalyses the reaction butan-1-ol + NAD(+) = butanal + NADH + H(+). The catalysed reaction is hexan-1-ol + NAD(+) = hexanal + NADH + H(+). The enzyme catalyses (R)-lactaldehyde + NAD(+) = methylglyoxal + NADH + H(+). It carries out the reaction octan-1-ol + NAD(+) = octanal + NADH + H(+). It catalyses the reaction butan-2-ol + NAD(+) = butan-2-one + NADH + H(+). The catalysed reaction is propan-2-ol + NAD(+) = acetone + NADH + H(+). The enzyme catalyses isobutanol + NAD(+) = 2-methylpropanal + NADH + H(+). Its function is as follows. Preferentially fermentative isozyme that reduces acetaldehyde to ethanol during the fermentation of glucose. Major enzyme required for the conversion of acetaldehyde to ethanol. Plays a key role in the carbohydrate metabolism through the regeneration of NAD(+) from glycolytic NADH. In the reverse reaction, preferentially catalyzes the conversion of primary unbranched alcohols to their corresponding aldehydes. Also shows activity toward secondary alcohols. Most active with ethanol, and its activity decreases as the size of the alcohol is increased. The chain is Alcohol dehydrogenase 1 (ADH1) from Saccharomyces cerevisiae (strain ATCC 204508 / S288c) (Baker's yeast).